The primary structure comprises 158 residues: uncharacterized protein (158 aa).

This sequence belongs to the SixA phosphatase family.

This is an uncharacterized protein from Mycobacterium tuberculosis (strain CDC 1551 / Oshkosh).